The sequence spans 326 residues: Phenylalanine--tRNA ligase alpha subunit (326 aa).

Residue E251 participates in Mg(2+) binding.

This sequence belongs to the class-II aminoacyl-tRNA synthetase family. Phe-tRNA synthetase alpha subunit type 1 subfamily. In terms of assembly, tetramer of two alpha and two beta subunits. Mg(2+) serves as cofactor.

It is found in the cytoplasm. The enzyme catalyses tRNA(Phe) + L-phenylalanine + ATP = L-phenylalanyl-tRNA(Phe) + AMP + diphosphate + H(+). The protein is Phenylalanine--tRNA ligase alpha subunit of Alteromonas mediterranea (strain DSM 17117 / CIP 110805 / LMG 28347 / Deep ecotype).